The sequence spans 113 residues: Large ribosomal subunit protein bL19 (113 aa).

It belongs to the bacterial ribosomal protein bL19 family.

This protein is located at the 30S-50S ribosomal subunit interface and may play a role in the structure and function of the aminoacyl-tRNA binding site. The polypeptide is Large ribosomal subunit protein bL19 (Nocardia farcinica (strain IFM 10152)).